The sequence spans 968 residues: Chaperone protein ClpB3, chloroplastic (968 aa).

The transit peptide at 1–67 (MATATTTATA…RLDHRPFVVR (67 aa)) directs the protein to the chloroplast. The 145-residue stretch at 78–222 (TQQEFTEMAW…KSAIESIRGK (145 aa)) folds into the Clp R domain. 2 repeat regions span residues 82–147 (FTEM…IQRQ) and 159–222 (LGRD…IRGK). An i region spans residues 237–485 (LEKYGKDLTA…KLKMEITSKP (249 aa)). Position 282–289 (282–289 (GEPGVGKT)) interacts with ATP. Residues 488 to 606 (LDELDRSVIK…NEYLSSGKSM (119 aa)) are a coiled coil. The segment at 611-802 (VLGSDIAEIV…VIIMTSNVGS (192 aa)) is II. ATP is bound at residue 685–692 (GPTGVGKT).

This sequence belongs to the ClpA/ClpB family.

It is found in the plastid. The protein localises to the chloroplast. Molecular chaperone essential for chloroplast development and seedling viability. Mediates internal thylakoid membrane formation and confers thermotolerance to chloroplasts during heat stress. This Arabidopsis thaliana (Mouse-ear cress) protein is Chaperone protein ClpB3, chloroplastic (CLPB3).